Consider the following 426-residue polypeptide: Histidine--tRNA ligase (426 aa).

It belongs to the class-II aminoacyl-tRNA synthetase family. As to quaternary structure, homodimer.

The protein resides in the cytoplasm. The catalysed reaction is tRNA(His) + L-histidine + ATP = L-histidyl-tRNA(His) + AMP + diphosphate + H(+). The polypeptide is Histidine--tRNA ligase (Lactiplantibacillus plantarum (strain ATCC BAA-793 / NCIMB 8826 / WCFS1) (Lactobacillus plantarum)).